The chain runs to 156 residues: MPRRREVPKRYVLPDPKYNSKLAAKFINNLMRRGKKSLAEHVLYGALDLIEQRSKQDPLDLFHKAMENVRPVVEVKSRRVGGATYQVPVEVRHERRDALAMRWIINYAKQRTEKTMIQRLAGELQDAAQNRGGSVKKREDTHRMAEANKAFAHYRW.

Belongs to the universal ribosomal protein uS7 family. Part of the 30S ribosomal subunit. Contacts proteins S9 and S11.

One of the primary rRNA binding proteins, it binds directly to 16S rRNA where it nucleates assembly of the head domain of the 30S subunit. Is located at the subunit interface close to the decoding center, probably blocks exit of the E-site tRNA. This Syntrophobacter fumaroxidans (strain DSM 10017 / MPOB) protein is Small ribosomal subunit protein uS7.